The chain runs to 315 residues: FAD-linked oxidoreductase sthB (315 aa).

In terms of domain architecture, FAD-binding PCMH-type spans 19-201 (QPCSLGNYVS…LSMTSRVHAD (183 aa)).

Belongs to the oxygen-dependent FAD-linked oxidoreductase family.

It carries out the reaction betaenone C = betaenone A. It catalyses the reaction stemphyloxin I = stemphyloxin II. It functions in the pathway mycotoxin biosynthesis. In terms of biological role, FAD-linked oxidoreductase; part of the gene cluster that mediates the biosynthesis of the phytotoxin stemphyloxin II. The first step of the pathway is the synthesis of dehydroprobetaenone I by the polyketide synthase sthA and the enoyl reductase sthE via condensation of one acetyl-CoA starter unit with 7 malonyl-CoA units and 5 methylations. The C-terminal reductase (R) domain of sthA catalyzes the reductive release of the polyketide chain. Because sthA lacks a designated enoylreductase (ER) domain, the required activity is provided the enoyl reductase sthE. The short-chain dehydrogenase/reductase sthC then catalyzes reduction of dehydroprobetaenone I to probetaenone I. The cytochrome P450 monooxygenase sthF catalyzes successive epoxidation, oxidation (resulting from epoxide opening) and hydroxylation to install a tertiary alcohol in the decaline ring to yield betaenone C from dehydroprobetaenone I and betaenone B from probetaenone I. The FAD-linked oxidoreductase sthB is responsible for the conversion of betaenone C to betaenone A via an intramolecular aldol reaction between C-1 and C-17 to form the bridged tricyclic system in betaenone A. Finally, the cytochrome P450 monooxygenase sthD catalyzes the hydroxylation of C-15 to afford the final metabolite stemphyloxin II. This chain is FAD-linked oxidoreductase sthB, found in Phaeosphaeria nodorum (strain SN15 / ATCC MYA-4574 / FGSC 10173) (Glume blotch fungus).